Here is a 236-residue protein sequence, read N- to C-terminus: uncharacterized protein (236 aa).

Disordered regions lie at residues Met1 to Ser48, Val67 to Arg122, and Lys134 to Thr192. A compositionally biased stretch (basic residues) spans Arg85–Cys99. Positions Pro180 to Pro189 are enriched in pro residues.

This is an uncharacterized protein from Encephalitozoon cuniculi (strain GB-M1) (Microsporidian parasite).